The chain runs to 245 residues: Ribosomal RNA small subunit methyltransferase J (245 aa).

S-adenosyl-L-methionine is bound by residues arginine 94–aspartate 95, glutamate 110–arginine 111, and aspartate 164.

Belongs to the methyltransferase superfamily. RsmJ family.

The protein resides in the cytoplasm. It carries out the reaction guanosine(1516) in 16S rRNA + S-adenosyl-L-methionine = N(2)-methylguanosine(1516) in 16S rRNA + S-adenosyl-L-homocysteine + H(+). Functionally, specifically methylates the guanosine in position 1516 of 16S rRNA. This is Ribosomal RNA small subunit methyltransferase J from Dechloromonas aromatica (strain RCB).